The primary structure comprises 65 residues: UPF0337 protein PA4738 (65 aa).

Belongs to the UPF0337 (CsbD) family.

This is UPF0337 protein PA4738 from Pseudomonas aeruginosa (strain ATCC 15692 / DSM 22644 / CIP 104116 / JCM 14847 / LMG 12228 / 1C / PRS 101 / PAO1).